Here is a 177-residue protein sequence, read N- to C-terminus: Parathyroid hormone-related protein (177 aa).

Positions 1 to 24 (MLRRLVQQWSVLVFLLSYSVPSRG) are cleaved as a signal peptide. The propeptide occupies 25-34 (RSVEGLGRRL). Residues 57 to 68 (RFFLHHLIAEIH) form an important for receptor binding region. The disordered stretch occupies residues 74 to 177 (ATSEVSPNSK…TSLEPSSRTH (104 aa)). The span at 76-90 (SEVSPNSKPAPNTKN) shows a compositional bias: polar residues. The Nuclear localization signal motif lies at 108 to 129 (TNKVETYKEQPLKTPGKKKKGK). Residues 109–118 (NKVETYKEQP) show a composition bias toward basic and acidic residues. A compositionally biased stretch (basic residues) spans 122-132 (PGKKKKGKPGK). Over residues 161 to 177 (PHTSPTSTSLEPSSRTH) the composition is skewed to low complexity.

Belongs to the parathyroid hormone family. In terms of assembly, PTHrP interacts with PTH1R (via N-terminal extracellular domain). There are several secretory forms, including osteostatin, arising from endoproteolytic cleavage of the initial translation product. Each of these secretory forms is believed to have one or more of its own receptors that mediates the normal paracrine, autocrine and endocrine actions.

It is found in the secreted. The protein resides in the cytoplasm. It localises to the nucleus. Functionally, neuroendocrine peptide which is a critical regulator of cellular and organ growth, development, migration, differentiation and survival and of epithelial calcium ion transport. Acts by binding to its receptor, PTH1R, activating G protein-coupled receptor signaling. Regulates endochondral bone development and epithelial-mesenchymal interactions during the formation of the mammary glands and teeth. Required for skeletal homeostasis. Promotes mammary mesenchyme differentiation and bud outgrowth by modulating mesenchymal cell responsiveness to BMPs. Up-regulates BMPR1A expression in the mammary mesenchyme and this increases the sensitivity of these cells to BMPs and allows them to respond to BMP4 in a paracrine and/or autocrine fashion. BMP4 signaling in the mesenchyme, in turn, triggers epithelial outgrowth and augments MSX2 expression, which causes the mammary mesenchyme to inhibit hair follicle formation within the nipple sheath. Potent inhibitor of osteoclastic bone resorption. This is Parathyroid hormone-related protein (Pthlh) from Rattus norvegicus (Rat).